Reading from the N-terminus, the 363-residue chain is 5-formaminoimidazole-4-carboxamide-1-(beta)-D-ribofuranosyl 5'-monophosphate synthetase (363 aa).

Positions 29 and 96 each coordinate 5-amino-1-(5-phospho-beta-D-ribosyl)imidazole-4-carboxamide. Residues Arg118–Arg350 form the ATP-grasp domain. Residues Pro148 to Cys210 and Glu232 contribute to the ATP site. Asn260 contributes to the 5-amino-1-(5-phospho-beta-D-ribosyl)imidazole-4-carboxamide binding site. Residues Gln299 and Glu312 each coordinate Mg(2+).

Belongs to the phosphohexose mutase family. Mg(2+) serves as cofactor. Mn(2+) is required as a cofactor.

The enzyme catalyses 5-amino-1-(5-phospho-beta-D-ribosyl)imidazole-4-carboxamide + formate + ATP = 5-formamido-1-(5-phospho-D-ribosyl)imidazole-4-carboxamide + ADP + phosphate. It participates in purine metabolism; IMP biosynthesis via de novo pathway; 5-formamido-1-(5-phospho-D-ribosyl)imidazole-4-carboxamide from 5-amino-1-(5-phospho-D-ribosyl)imidazole-4-carboxamide (formate route): step 1/1. Catalyzes the ATP- and formate-dependent formylation of 5-aminoimidazole-4-carboxamide-1-beta-d-ribofuranosyl 5'-monophosphate (AICAR) to 5-formaminoimidazole-4-carboxamide-1-beta-d-ribofuranosyl 5'-monophosphate (FAICAR) in the absence of folates. This Methanothermobacter thermautotrophicus (strain ATCC 29096 / DSM 1053 / JCM 10044 / NBRC 100330 / Delta H) (Methanobacterium thermoautotrophicum) protein is 5-formaminoimidazole-4-carboxamide-1-(beta)-D-ribofuranosyl 5'-monophosphate synthetase.